A 237-amino-acid chain; its full sequence is Insulin-like growth factor-binding protein 6 (237 aa).

The signal sequence occupies residues 1–25 (MTPHRLLPPLLLTLLLAARPGGALA). An IGFBP N-terminal domain is found at 26–105 (RCPGCGQGVS…LQGRGRCGRA (80 aa)). Cystine bridges form between Cys27–Cys30, Cys38–Cys42, Cys55–Cys61, Cys69–Cys82, and Cys76–Cys102. Residues 101–158 (RCGRARTPSGENPKESKPQAGTARSQDVNRRDQQRNSGTSTTPSRSNSGGVQDTEMGP) are disordered. Over residues 135–151 (RNSGTSTTPSRSNSGGV) the composition is skewed to polar residues. Residues 156-231 (MGPCRKHLDS…SEGGDGSSLC (76 aa)) enclose the Thyroglobulin type-1 domain. 3 disulfide bridges follow: Cys159-Cys186, Cys197-Cys208, and Cys210-Cys231. A disordered region spans residues 215 to 237 (GQPLPGSSEGGDGSSLCPTGSSG).

In terms of assembly, interacts (via C-terminal domain) with PHB2. In terms of processing, O-glycosylated.

It localises to the secreted. In terms of biological role, IGF-binding proteins prolong the half-life of the IGFs and have been shown to either inhibit or stimulate the growth promoting effects of the IGFs on cell culture. They alter the interaction of IGFs with their cell surface receptors. Activates the MAPK signaling pathway and induces cell migration. The polypeptide is Insulin-like growth factor-binding protein 6 (IGFBP6) (Bos taurus (Bovine)).